We begin with the raw amino-acid sequence, 500 residues long: Mannan polymerase II complex ANP1 subunit (500 aa).

At 1–15 (MKYNNRKLSFNPTTV) the chain is on the cytoplasmic side. The helical; Signal-anchor for type II membrane protein transmembrane segment at 16-27 (SIAGTLLTVFFL) threads the bilayer. At 28–500 (TRLVLSFFSI…VPLDFDPDRN (473 aa)) the chain is on the lumenal side. Residues 424 to 500 (WSEEGDGSEL…VPLDFDPDRN (77 aa)) are disordered. Low complexity predominate over residues 446–467 (QQQQQQQQQQQQQQQQQQQQQQ). Residues 489–500 (KEVPLDFDPDRN) are compositionally biased toward basic and acidic residues.

The protein belongs to the ANP1/MMN9/VAN1 family. In terms of assembly, component of the M-Pol II complex composed of ANP1, MNN9, MNN10, MNN11 and HOC1.

It localises to the endoplasmic reticulum membrane. The protein resides in the golgi apparatus membrane. Functionally, involved in the organization of the secretory pathway. Required to maintain a functional Golgi apparatus. Its function is as follows. The M-Pol II complex possesses alpha-1,6-mannosyltransferase activity and is probably involved in the elongation of the mannan backbone of N-linked glycans on cell wall and periplasmic proteins. The polypeptide is Mannan polymerase II complex ANP1 subunit (ANP1) (Saccharomyces cerevisiae (strain ATCC 204508 / S288c) (Baker's yeast)).